The primary structure comprises 310 residues: tRNA dimethylallyltransferase (310 aa).

Glycine 9–threonine 16 provides a ligand contact to ATP. Threonine 11–threonine 16 is a substrate binding site. Positions aspartate 34–glutamine 37 are interaction with substrate tRNA.

The protein belongs to the IPP transferase family. In terms of assembly, monomer. Mg(2+) is required as a cofactor.

The catalysed reaction is adenosine(37) in tRNA + dimethylallyl diphosphate = N(6)-dimethylallyladenosine(37) in tRNA + diphosphate. Catalyzes the transfer of a dimethylallyl group onto the adenine at position 37 in tRNAs that read codons beginning with uridine, leading to the formation of N6-(dimethylallyl)adenosine (i(6)A). This chain is tRNA dimethylallyltransferase, found in Syntrophomonas wolfei subsp. wolfei (strain DSM 2245B / Goettingen).